Reading from the N-terminus, the 111-residue chain is Gene 81 protein (111 aa).

The protein is Gene 81 protein (81) of Mycobacterium (Mycobacteriophage L5).